A 394-amino-acid chain; its full sequence is Cell division protein FtsZ (394 aa).

GTP is bound by residues 21-25, 108-110, Glu-139, Arg-143, and Asp-187; these read GGGNN and GTG. Residues 317–394 form a disordered region; it reads DKPSSQGRKA…EERRSRRTRR (78 aa). 2 stretches are compositionally biased toward low complexity: residues 328-346 and 353-364; these read STGFGSSVNSSSNHQSGAS and SAHTSHSQSSES. Basic and acidic residues predominate over residues 365-388; that stretch reads VNERSHTTKDDDIPSFIRNREERR.

Belongs to the FtsZ family. Homodimer. Polymerizes to form a dynamic ring structure in a strictly GTP-dependent manner. Interacts directly with several other division proteins.

It is found in the cytoplasm. Essential cell division protein that forms a contractile ring structure (Z ring) at the future cell division site. The regulation of the ring assembly controls the timing and the location of cell division. One of the functions of the FtsZ ring is to recruit other cell division proteins to the septum to produce a new cell wall between the dividing cells. Binds GTP and shows GTPase activity. The chain is Cell division protein FtsZ from Staphylococcus epidermidis (strain ATCC 12228 / FDA PCI 1200).